The sequence spans 462 residues: ATP synthase subunit beta (462 aa).

151–158 contributes to the ATP binding site; that stretch reads GGAGVGKT.

This sequence belongs to the ATPase alpha/beta chains family. As to quaternary structure, F-type ATPases have 2 components, CF(1) - the catalytic core - and CF(0) - the membrane proton channel. CF(1) has five subunits: alpha(3), beta(3), gamma(1), delta(1), epsilon(1). CF(0) has three main subunits: a(1), b(2) and c(9-12). The alpha and beta chains form an alternating ring which encloses part of the gamma chain. CF(1) is attached to CF(0) by a central stalk formed by the gamma and epsilon chains, while a peripheral stalk is formed by the delta and b chains.

The protein resides in the cell inner membrane. The enzyme catalyses ATP + H2O + 4 H(+)(in) = ADP + phosphate + 5 H(+)(out). Produces ATP from ADP in the presence of a proton gradient across the membrane. The catalytic sites are hosted primarily by the beta subunits. The protein is ATP synthase subunit beta of Chlorobium limicola.